The chain runs to 374 residues: Isopentenyl-diphosphate delta-isomerase (374 aa).

13 to 14 (RK) lines the substrate pocket. Residues 71–73 (GMT), S104, and N132 each bind FMN. 104–106 (SQR) lines the substrate pocket. Residue Q171 coordinates substrate. E172 contributes to the Mg(2+) binding site. Residues K203, T233, 282-284 (GMR), and 303-304 (AL) each bind FMN.

Belongs to the IPP isomerase type 2 family. Homooctamer. Dimer of tetramers. FMN serves as cofactor. It depends on NADPH as a cofactor. Mg(2+) is required as a cofactor.

Its subcellular location is the cytoplasm. The enzyme catalyses isopentenyl diphosphate = dimethylallyl diphosphate. Its function is as follows. Involved in the biosynthesis of isoprenoids. Catalyzes the 1,3-allylic rearrangement of the homoallylic substrate isopentenyl (IPP) to its allylic isomer, dimethylallyl diphosphate (DMAPP). This is Isopentenyl-diphosphate delta-isomerase from Thermococcus kodakarensis (strain ATCC BAA-918 / JCM 12380 / KOD1) (Pyrococcus kodakaraensis (strain KOD1)).